The sequence spans 308 residues: Putative mitochondrial transporter UCP3 (308 aa).

At 1-10 the chain is on the mitochondrial intermembrane side; sequence MVGLQPSEVP. Residues 11 to 32 form a helical membrane-spanning segment; the sequence is PTTVVKFLGAGTAACFADLLTF. Solcar repeat units lie at residues 11–102, 111–202, and 211–296; these read PTTV…VKQF, SSVA…IKEK, and DNFP…LKRA. Over 33–73 the chain is Mitochondrial matrix; sequence PLDTAKVRLQIQGENPGVQSVQYRGVLGTILTMVRTEGPRS. Residues 74-96 traverse the membrane as a helical segment; the sequence is PYSGLVAGLHRQMSFASIRIGLY. Topologically, residues 97 to 116 are mitochondrial intermembrane; that stretch reads DSVKQFYTPKGTDHSSVAIR. A helical transmembrane segment spans residues 117-133; the sequence is ILAGCTTGAMAVTCAQP. At 134–179 the chain is on the mitochondrial matrix side; it reads TDVVKVRFQAMIRLGTGGERKYRGTMDAYRTIAREEGVRGLWKGTW. A helical transmembrane segment spans residues 180–196; it reads PNITRNAIVNCAEMVTY. At 197–213 the chain is on the mitochondrial intermembrane side; that stretch reads DIIKEKLLDSHLFTDNF. Residues 214–233 traverse the membrane as a helical segment; it reads PCHFVSAFGAGFCATVVASP. Residues 234–267 lie on the Mitochondrial matrix side of the membrane; that stretch reads VDVVKTRYMNAPPGRYRSPLHCMLRMVAQEGPTA. A helical membrane pass occupies residues 268–290; it reads FYKGFMPSFLRLGSWNVMMFVTY. The interval 275–297 is purine nucleotide binding; the sequence is SFLRLGSWNVMMFVTYEQLKRAL. The Mitochondrial intermembrane segment spans residues 291-308; that stretch reads EQLKRALMKVQVLRESPF.

Belongs to the mitochondrial carrier (TC 2.A.29) family. In terms of assembly, interacts with HAX1; the interaction is direct and calcium-dependent.

Its subcellular location is the mitochondrion inner membrane. In terms of biological role, putative transmembrane transporter that plays a role in mitochondrial metabolism via an as yet unclear mechanism. Originally, this mitochondrial protein was thought to act as a proton transmembrane transporter from the mitochondrial intermembrane space into the matrix, causing proton leaks through the inner mitochondrial membrane, thereby uncoupling mitochondrial membrane potential generation from ATP synthesis. However, this function is controversial and uncoupling may not be the function, or at least not the main function, but rather a consequence of more conventional metabolite transporter activity. This chain is Putative mitochondrial transporter UCP3, found in Rattus norvegicus (Rat).